Here is a 287-residue protein sequence, read N- to C-terminus: Lycopene elongase/hydratase (287 aa).

A run of 7 helical transmembrane segments spans residues 15–35, 37–57, 97–117, 137–157, 166–186, 218–238, and 265–285; these read ISWV…AGEI, WLFW…MYGI, IPFL…WLTI, FIDA…GATI, MWIA…LGAV, LLAA…GIAI, and VFLW…IAIH.

This sequence belongs to the UbiA prenyltransferase family.

The protein localises to the cell membrane. The enzyme catalyses all-trans-lycopene + dimethylallyl diphosphate + A + H2O = nonaflavuxanthin + AH2 + diphosphate. It carries out the reaction nonaflavuxanthin + dimethylallyl diphosphate + A + H2O = flavuxanthin + AH2 + diphosphate. It functions in the pathway carotenoid biosynthesis. Its function is as follows. Catalyzes the elongation of the C(40) carotenoid all-trans-lycopene to the acyclic C(50) carotenoid flavuxanthin during decaprenoxanthin biosynthesis. Acts as a bifunctional enzyme that catalyzes the elongation of lycopene by attaching a C(5) isoprene unit at C-2, as well as the hydroxylation of the new isoprene unit. The enzyme acts at both ends of the substrate, forming the C(50) carotenoid flavuxanthin via the C(45) intermediate nonaflavuxanthin. This Corynebacterium glutamicum (Brevibacterium saccharolyticum) protein is Lycopene elongase/hydratase.